The sequence spans 389 residues: Abscission/NoCut checkpoint regulator (389 aa).

An FYVE-type zinc finger spans residues 1–58 (MESRCYGCAVKFTLFKKEYGCKNCGRAFCNGCLSFSALVPRAGNTQQKVCKQCHTILT). Residues C5, C8, C21, C24, C29, C32, C50, and C53 each coordinate Zn(2+). S69 carries the phosphoserine modification. Residues 99–112 (DQAIAERLARLRQE) carry the MIM1-A motif. A Glycyl lysine isopeptide (Lys-Gly) (interchain with G-Cter in SUMO2) cross-link involves residue K132. 2 disordered regions span residues 158 to 177 (PSHT…QAQQ) and 204 to 227 (QNDL…SQSL). Positions 167 to 177 (QAPDTRTQAQQ) are enriched in low complexity. A compositionally biased stretch (polar residues) spans 214 to 226 (SQRTNSQGQASQS). S219 is subject to Phosphoserine. A coiled-coil region spans residues 226 to 261 (SLEEEKYKLLAEAAVELQEENTRQERILALAKRLAV). The MIM1-B signature appears at 252-265 (ILALAKRLAVLKGQ). S280 is subject to Phosphoserine.

In terms of assembly, interacts (via MIM1-B) with VPS4A; interaction takes place at the midbody ring following cytokinesis checkpoint activation.

The protein resides in the cytoplasm. The protein localises to the cytoskeleton. Its subcellular location is the microtubule organizing center. It localises to the centrosome. It is found in the cleavage furrow. The protein resides in the midbody. The protein localises to the midbody ring. Its function is as follows. Key regulator of abscission step in cytokinesis: part of the cytokinesis checkpoint, a process required to delay abscission to prevent both premature resolution of intercellular chromosome bridges and accumulation of DNA damage. Together with CHMP4C, required to retain abscission-competent VPS4 (VPS4A and/or VPS4B) at the midbody ring until abscission checkpoint signaling is terminated at late cytokinesis. Deactivation of AURKB results in dephosphorylation of CHMP4C followed by its dissociation from ZFYVE19/ANCHR and VPS4 and subsequent abscission. This chain is Abscission/NoCut checkpoint regulator (Zfyve19), found in Mus musculus (Mouse).